The sequence spans 235 residues: PRA1 family protein 1 (235 aa).

The span at 1–17 (MESNSNSNETMYGNPNI) shows a compositional bias: polar residues. The disordered stretch occupies residues 1-55 (MESNSNSNETMYGNPNINMGFVDSGNSNIGNNTGSMSPPPQQQQQPQQASSTPAG). Residues 24 to 48 (SGNSNIGNNTGSMSPPPQQQQQPQQ) show a composition bias toward low complexity. Transmembrane regions (helical) follow at residues 144–164 (SVFF…LLFI) and 187–207 (AFLS…LVGA).

This sequence belongs to the PRA1 family.

The protein localises to the membrane. May act as a general Rab protein regulator. This Dictyostelium discoideum (Social amoeba) protein is PRA1 family protein 1 (prafA).